Here is a 388-residue protein sequence, read N- to C-terminus: MRYLTAGESHGPRLTAIIEGVPAGLPLTAEDINEELKRRQGGYGRGSRMQIETDRVEITAGVRHGKTTGAPITLNVTNKDHQKWLDIMAVEDIEEKLKSKRRIKHPRPGHADLVGGMKYRFDDLRNSLERSSARETTMRVAVGAVAKRILAELDIEIANHVVVFGGKEIDVPDGLSVAEIKERAAQSEVSIVNQEREEEIKAYIDQIKRDGDTIGGVIETVVGGVPAGLGSYVQWDKKLDAKLAQAVVSINAFKGVEFGVGFQAGYLKGSQVMDEILWSQEKGYTRRTNNLGGFEGGMTNGEALIIRGVMKPIPTLYKPLMSVDIDTHEPYKATVERSDPTALPAAGVVMESVVATTLATEILEKFSSDNMEELKAAVASHRDYVKNF.

R39 and R45 together coordinate NADP(+). Residues 130–132 (RSS), 251–252 (NA), G296, 311–315 (KPIPT), and R337 each bind FMN.

Belongs to the chorismate synthase family. As to quaternary structure, homotetramer. FMNH2 serves as cofactor.

It catalyses the reaction 5-O-(1-carboxyvinyl)-3-phosphoshikimate = chorismate + phosphate. It participates in metabolic intermediate biosynthesis; chorismate biosynthesis; chorismate from D-erythrose 4-phosphate and phosphoenolpyruvate: step 7/7. In terms of biological role, catalyzes the anti-1,4-elimination of the C-3 phosphate and the C-6 proR hydrogen from 5-enolpyruvylshikimate-3-phosphate (EPSP) to yield chorismate, which is the branch point compound that serves as the starting substrate for the three terminal pathways of aromatic amino acid biosynthesis. This reaction introduces a second double bond into the aromatic ring system. In Streptococcus suis (strain 98HAH33), this protein is Chorismate synthase.